We begin with the raw amino-acid sequence, 265 residues long: Hydroxyethylthiazole kinase (265 aa).

Residue Met50 coordinates substrate. ATP is bound by residues Arg125 and Thr171. Residue Gly198 participates in substrate binding.

It belongs to the Thz kinase family. Mg(2+) is required as a cofactor.

It carries out the reaction 5-(2-hydroxyethyl)-4-methylthiazole + ATP = 4-methyl-5-(2-phosphooxyethyl)-thiazole + ADP + H(+). The protein operates within cofactor biosynthesis; thiamine diphosphate biosynthesis; 4-methyl-5-(2-phosphoethyl)-thiazole from 5-(2-hydroxyethyl)-4-methylthiazole: step 1/1. In terms of biological role, catalyzes the phosphorylation of the hydroxyl group of 4-methyl-5-beta-hydroxyethylthiazole (THZ). This is Hydroxyethylthiazole kinase from Salmonella choleraesuis (strain SC-B67).